The sequence spans 454 residues: Chromosomal replication initiator protein DnaA (454 aa).

The interval 1–83 is domain I, interacts with DnaA modulators; sequence MMTDSMRLVW…RPLKVLLEVA (83 aa). Residues 83-115 are domain II; that stretch reads AECVAEAPETPEEAPQQLCLPAFADIPRPSSGR. The domain III, AAA+ region stretch occupies residues 116 to 333; sequence LLNRDFTFDS…SGIKGLAARN (218 aa). ATP is bound by residues Gly-160, Gly-162, Lys-163, and Ser-164. Residues 334 to 454 form a domain IV, binds dsDNA region; the sequence is SIMGRGIDLK…LCGKIEAGEF (121 aa).

The protein belongs to the DnaA family. As to quaternary structure, oligomerizes as a right-handed, spiral filament on DNA at oriC.

The protein resides in the cytoplasm. Its function is as follows. Plays an essential role in the initiation and regulation of chromosomal replication. ATP-DnaA binds to the origin of replication (oriC) to initiate formation of the DNA replication initiation complex once per cell cycle. Binds the DnaA box (a 9 base pair repeat at the origin) and separates the double-stranded (ds)DNA. Forms a right-handed helical filament on oriC DNA; dsDNA binds to the exterior of the filament while single-stranded (ss)DNA is stabiized in the filament's interior. The ATP-DnaA-oriC complex binds and stabilizes one strand of the AT-rich DNA unwinding element (DUE), permitting loading of DNA polymerase. After initiation quickly degrades to an ADP-DnaA complex that is not apt for DNA replication. Binds acidic phospholipids. The protein is Chromosomal replication initiator protein DnaA of Desulfatibacillum aliphaticivorans.